The primary structure comprises 217 residues: Small ribosomal subunit protein uS3 (217 aa).

The 69-residue stretch at 38 to 106 (IRKYIDNALQ…KVHINVIEIK (69 aa)) folds into the KH type-2 domain.

This sequence belongs to the universal ribosomal protein uS3 family. In terms of assembly, part of the 30S ribosomal subunit. Forms a tight complex with proteins S10 and S14.

Functionally, binds the lower part of the 30S subunit head. Binds mRNA in the 70S ribosome, positioning it for translation. The sequence is that of Small ribosomal subunit protein uS3 from Staphylococcus saprophyticus subsp. saprophyticus (strain ATCC 15305 / DSM 20229 / NCIMB 8711 / NCTC 7292 / S-41).